The sequence spans 566 residues: MAINPPVDATQTPEWAALQKHYDELQVEGVSLKKWFAEDAERVEKLSFDAGDLHFDLSKNLIKPETLQLFANLAKAVKLDERTKAMYTGVHINNTEDRAVLHTALRRPVEDEGKYIVDGQDTVKDVRETLDKIYAFADDVRSGKWTGVTGRKIETVVNIGIGGSDLGPVMVYEALKPYADAGISARYISNIDPNDLAEKTKGLDPETTLFIIVSKTFTTLETLTNAREARTWLLEELTANGAIAEGDEAQKAEAIKKHFVAVSTNLEKVEEFGIDPNNAFGFWNWVGGRYSVDSAVGTSLAVVFGPARFEEFLHGFHEIDEYFANTPFEKNVVVLLGMLNVWYRNFFKVASHAVLPYDQYLHRFPAYLQQLTMESNGKSVRWDGTPVTSETGEIFWGEPGTNGQHAFYQLIHQGTQLIPADFIAFVNTPNPTKDGDQDVHELFLGNYFAQTKALAFGKTADEVRAEGTPEEIVPARVFSGNRPTTSIFGVALTPFALGELIALYEHITFVEGTVWGLDSYDQWGVELGKQLAKQITPAISQDDDALAAQDASTQSLIKFYRANREF.

Glu374 acts as the Proton donor in catalysis. Active-site residues include His405 and Lys529.

Belongs to the GPI family.

The protein resides in the cytoplasm. The catalysed reaction is alpha-D-glucose 6-phosphate = beta-D-fructose 6-phosphate. It participates in carbohydrate biosynthesis; gluconeogenesis. The protein operates within carbohydrate degradation; glycolysis; D-glyceraldehyde 3-phosphate and glycerone phosphate from D-glucose: step 2/4. In terms of biological role, catalyzes the reversible isomerization of glucose-6-phosphate to fructose-6-phosphate. The protein is Glucose-6-phosphate isomerase of Bifidobacterium longum (strain NCC 2705).